The sequence spans 332 residues: Ferredoxin--NADP reductase (332 aa).

Residues T20, E39, Q47, Y52, V92, F126, D288, and S329 each contribute to the FAD site.

It belongs to the ferredoxin--NADP reductase type 2 family. Homodimer. FAD is required as a cofactor.

The enzyme catalyses 2 reduced [2Fe-2S]-[ferredoxin] + NADP(+) + H(+) = 2 oxidized [2Fe-2S]-[ferredoxin] + NADPH. This Geobacillus thermodenitrificans (strain NG80-2) protein is Ferredoxin--NADP reductase.